Consider the following 201-residue polypeptide: Holliday junction resolvase RecU (201 aa).

Positions 1–26 (MAIGYPNGKKYAASQEELPQQKRKAP) are disordered. Mg(2+)-binding residues include threonine 87, aspartate 89, glutamate 102, and glutamine 121.

The protein belongs to the RecU family. Requires Mg(2+) as cofactor.

The protein localises to the cytoplasm. The catalysed reaction is Endonucleolytic cleavage at a junction such as a reciprocal single-stranded crossover between two homologous DNA duplexes (Holliday junction).. Its function is as follows. Endonuclease that resolves Holliday junction intermediates in genetic recombination. Cleaves mobile four-strand junctions by introducing symmetrical nicks in paired strands. Promotes annealing of linear ssDNA with homologous dsDNA. Required for DNA repair, homologous recombination and chromosome segregation. In Listeria monocytogenes serotype 4a (strain HCC23), this protein is Holliday junction resolvase RecU.